The following is a 274-amino-acid chain: Large ribosomal subunit protein uL2 (274 aa).

Disordered regions lie at residues 28–53 (APYA…TVRH) and 223–274 (VAMN…RRNK). The segment covering 39–48 (KSGGRNNNGR) has biased composition (low complexity).

It belongs to the universal ribosomal protein uL2 family. Part of the 50S ribosomal subunit. Forms a bridge to the 30S subunit in the 70S ribosome.

Functionally, one of the primary rRNA binding proteins. Required for association of the 30S and 50S subunits to form the 70S ribosome, for tRNA binding and peptide bond formation. It has been suggested to have peptidyltransferase activity; this is somewhat controversial. Makes several contacts with the 16S rRNA in the 70S ribosome. This Pseudoalteromonas atlantica (strain T6c / ATCC BAA-1087) protein is Large ribosomal subunit protein uL2.